The following is a 354-amino-acid chain: Guanine nucleotide-binding protein G(o) subunit alpha (354 aa).

The N-myristoyl glycine moiety is linked to residue glycine 2. Cysteine 3 carries the S-palmitoyl cysteine lipid modification. Residues 32-354 (KDVKLLLLGA…ANNLRGCGLY (323 aa)) form the G-alpha domain. The segment at 35–48 (KLLLLGAGESGKST) is G1 motif. The GTP site is built by glutamate 43, lysine 46, serine 47, threonine 48, serine 152, leucine 176, arginine 177, threonine 178, and arginine 179. Serine 47 is a Mg(2+) binding site. The tract at residues 174-182 (DILRTRVKT) is G2 motif. Residue threonine 182 participates in Mg(2+) binding. Residues 197 to 206 (FRLFDVGGQR) are G3 motif. At glutamine 205 the chain carries 5-glutamyl histamine. Residues 266-273 (ILFLNKKD) form a G4 motif region. Residues asparagine 270, aspartate 273, and cysteine 325 each contribute to the GTP site. The tract at residues 324 to 329 (TCATDT) is G5 motif. Cysteine 351 carries S-palmitoyl cysteine lipidation.

It belongs to the G-alpha family. G(i/o/t/z) subfamily. As to quaternary structure, g proteins are composed of 3 units; alpha, beta and gamma. The alpha chain contains the guanine nucleotide binding site. Forms a complex with GNB1 and GNG3. Interacts with RGS14. Interacts with RGS16. Interacts with RGS19. Interacts (when palmitoylated) with ADGRG3. In terms of processing, histaminylated at Gln-205 residues by TGM2.

It is found in the cell membrane. The protein resides in the membrane. The catalysed reaction is GTP + H2O = GDP + phosphate + H(+). Its activity is regulated as follows. The GTPase activity is promoted by GTPAse activators, such as RGS14, RGS16 and RGS19. In terms of biological role, guanine nucleotide-binding proteins (G proteins) function as transducers downstream of G protein-coupled receptors (GPCRs) in numerous signaling cascades. The alpha chain contains the guanine nucleotide binding site and alternates between an active, GTP-bound state and an inactive, GDP-bound state. Signaling by an activated GPCR promotes GDP release and GTP binding. The alpha subunit has a low GTPase activity that converts bound GTP to GDP, thereby terminating the signal. Both GDP release and GTP hydrolysis are modulated by numerous regulatory proteins. Signaling is mediated via effector proteins, such as adenylate cyclase. Inhibits adenylate cyclase activity, leading to decreased intracellular cAMP levels. The protein is Guanine nucleotide-binding protein G(o) subunit alpha (Gnao1) of Mus musculus (Mouse).